The following is a 439-amino-acid chain: MASDGSPSCCSSEPCAGASGCATASFCPTNTTCLPNTCSTSRCQTPSFLCRASLPACCLSPCYLAGGCNSPCLVGSCAWCEEGSFNSNEKETMQFLNDRLASYLERVRSLEENNAELECRIREQCEPNAPLVCPDYQRYFDTIEELQQKILCTKAENSRLAVQVDNCKLAADDFRSKYESELSLRQLVENDITGLRGILGELTLCKSDLEAHVESMKDDLICLKKGHEEEVNLLREQLGDRLSVELDTAPTVDLNKVLDEMRCQYERVLANNRRDAEEWFAAQTEELNQQQKSSAEQLEGCQTEMLELKRKANTLEIELQAQQTLTESLECTVAETEAQYSTQLAQMQCLIDSVEHQLAEIRCDLERQNQEYQVLLDTKARLECEINTYRGLLEKEDSRLPCNPGSGAPMPNSTCEPCSNSMCEPCSAYVICTVENCCA.

Residues 1–89 form a head region; that stretch reads MASDGSPSCC…CEEGSFNSNE (89 aa). Positions 89–400 constitute an IF rod domain; it reads EKETMQFLND…GLLEKEDSRL (312 aa). The tract at residues 90 to 124 is coil 1A; it reads KETMQFLNDRLASYLERVRSLEENNAELECRIREQ. The interval 125–135 is linker 1; it reads CEPNAPLVCPD. The interval 136 to 236 is coil 1B; sequence YQRYFDTIEE…HEEEVNLLRE (101 aa). A linker 12 region spans residues 237–252; sequence QLGDRLSVELDTAPTV. The interval 253–396 is coil 2; the sequence is DLNKVLDEMR…NTYRGLLEKE (144 aa). Residues 397 to 439 form a tail region; sequence DSRLPCNPGSGAPMPNSTCEPCSNSMCEPCSAYVICTVENCCA.

Belongs to the intermediate filament family. As to quaternary structure, heterotetramer of two type I and two type II keratins.

May play a role in late hair differentiation. This chain is Keratin, type I cytoskeletal 40 (Krt40), found in Mus musculus (Mouse).